The chain runs to 732 residues: Glycine--tRNA ligase (732 aa).

A mitochondrion-targeting transit peptide spans 1–27 (MRHVLSLVYKCSVFSKQVTVFSNHLRL). The region spanning 61-117 (ILAPLRANVKEQGDLVRKLKEEKAPEIDIKKAVAELKTRKKILEDKELSLAPAEDLF) is the WHEP-TRS domain. Glu297 lines the glycine pocket. ATP-binding positions include 329–331 (RNE) and 340–341 (RV). Position 348 (Glu348) interacts with glycine. Residue 453-454 (EC) participates in ATP binding. Position 572–574 (572–574 (EPS)) interacts with glycine. Arg579 is a binding site for ATP.

The protein belongs to the class-II aminoacyl-tRNA synthetase family. In terms of assembly, homodimer.

Its subcellular location is the mitochondrion. It localises to the cytoplasm. It is found in the cell projection. The protein localises to the axon. The catalysed reaction is tRNA(Gly) + glycine + ATP = glycyl-tRNA(Gly) + AMP + diphosphate. It carries out the reaction 2 ATP + H(+) = P(1),P(4)-bis(5'-adenosyl) tetraphosphate + diphosphate. Functionally, catalyzes the ATP-dependent ligation of glycine to the 3'-end of its cognate tRNA, via the formation of an aminoacyl-adenylate intermediate (Gly-AMP). Also produces diadenosine tetraphosphate (Ap4A), a universal pleiotropic signaling molecule needed for cell regulation pathways, by direct condensation of 2 ATPs. Thereby, may play a special role in Ap4A homeostasis. Required for terminal arborization of both dendrites and axons during development. In Bombyx mori (Silk moth), this protein is Glycine--tRNA ligase.